The following is a 316-amino-acid chain: Sulfate adenylyltransferase subunit 2 (316 aa).

The segment at 297-316 (RAIDRDQSGSMEKKKREGYF) is disordered.

This sequence belongs to the PAPS reductase family. CysD subfamily. As to quaternary structure, heterodimer composed of CysD, the smaller subunit, and CysN.

It carries out the reaction sulfate + ATP + H(+) = adenosine 5'-phosphosulfate + diphosphate. Its pathway is sulfur metabolism; hydrogen sulfide biosynthesis; sulfite from sulfate: step 1/3. In terms of biological role, with CysN forms the ATP sulfurylase (ATPS) that catalyzes the adenylation of sulfate producing adenosine 5'-phosphosulfate (APS) and diphosphate, the first enzymatic step in sulfur assimilation pathway. APS synthesis involves the formation of a high-energy phosphoric-sulfuric acid anhydride bond driven by GTP hydrolysis by CysN coupled to ATP hydrolysis by CysD. The sequence is that of Sulfate adenylyltransferase subunit 2 from Allorhizobium ampelinum (strain ATCC BAA-846 / DSM 112012 / S4) (Agrobacterium vitis (strain S4)).